The chain runs to 157 residues: Transcription elongation factor GreA (157 aa).

This sequence belongs to the GreA/GreB family.

Necessary for efficient RNA polymerase transcription elongation past template-encoded arresting sites. The arresting sites in DNA have the property of trapping a certain fraction of elongating RNA polymerases that pass through, resulting in locked ternary complexes. Cleavage of the nascent transcript by cleavage factors such as GreA or GreB allows the resumption of elongation from the new 3'terminus. GreA releases sequences of 2 to 3 nucleotides. In Caulobacter vibrioides (strain ATCC 19089 / CIP 103742 / CB 15) (Caulobacter crescentus), this protein is Transcription elongation factor GreA.